The sequence spans 494 residues: tRNA-2-methylthio-N(6)-dimethylallyladenosine synthase (494 aa).

An MTTase N-terminal domain is found at 4–120 (RSYQVRTFGC…LPVLLERARH (117 aa)). [4Fe-4S] cluster contacts are provided by Cys13, Cys49, Cys83, Cys157, Cys161, and Cys164. The Radical SAM core domain maps to 143–374 (RASHHSAWVS…SLQDEMSWAE (232 aa)). The TRAM domain maps to 376-449 (RAQVGRRVEI…PHHLTADGPL (74 aa)). The tract at residues 465–494 (RAIAGDTPRPDRPAVSLGMPQLRPSAPAAR) is disordered.

It belongs to the methylthiotransferase family. MiaB subfamily. In terms of assembly, monomer. [4Fe-4S] cluster serves as cofactor.

Its subcellular location is the cytoplasm. It catalyses the reaction N(6)-dimethylallyladenosine(37) in tRNA + (sulfur carrier)-SH + AH2 + 2 S-adenosyl-L-methionine = 2-methylsulfanyl-N(6)-dimethylallyladenosine(37) in tRNA + (sulfur carrier)-H + 5'-deoxyadenosine + L-methionine + A + S-adenosyl-L-homocysteine + 2 H(+). Catalyzes the methylthiolation of N6-(dimethylallyl)adenosine (i(6)A), leading to the formation of 2-methylthio-N6-(dimethylallyl)adenosine (ms(2)i(6)A) at position 37 in tRNAs that read codons beginning with uridine. The polypeptide is tRNA-2-methylthio-N(6)-dimethylallyladenosine synthase (Parafrankia sp. (strain EAN1pec)).